Here is a 224-residue protein sequence, read N- to C-terminus: Ribosomal RNA small subunit methyltransferase I (224 aa).

It belongs to the methyltransferase superfamily. RsmI family.

The protein localises to the cytoplasm. The enzyme catalyses cytidine(1402) in 16S rRNA + S-adenosyl-L-methionine = 2'-O-methylcytidine(1402) in 16S rRNA + S-adenosyl-L-homocysteine + H(+). Functionally, catalyzes the 2'-O-methylation of the ribose of cytidine 1402 (C1402) in 16S rRNA. The polypeptide is Ribosomal RNA small subunit methyltransferase I (Borrelia garinii subsp. bavariensis (strain ATCC BAA-2496 / DSM 23469 / PBi) (Borreliella bavariensis)).